The primary structure comprises 753 residues: Nuclear pore complex protein Nup88 (753 aa).

N-acetylalanine is present on Ala2. 4 positions are modified to phosphoserine: Ser35, Ser380, Ser438, and Ser518. Thr526 is subject to Phosphothreonine. The residue at position 541 (Ser541) is a Phosphoserine. Residues 623–663 (FRKSLREMAERLADKYEEAKEKQEDIMNRMKKVLHSFHAQL) adopt a coiled-coil conformation. Ser710 is modified (phosphoserine).

Interacts with NUP214/CAN. Interacts with NUP62 and NUP98.

It is found in the nucleus. It localises to the nuclear pore complex. Functionally, component of nuclear pore complex. The sequence is that of Nuclear pore complex protein Nup88 (Nup88) from Mus musculus (Mouse).